A 241-amino-acid polypeptide reads, in one-letter code: Probable transcriptional regulatory protein SAR11_0592 (241 aa).

The interval 1 to 24 (MSGHSKWASIKHSKGKADKQRSKV) is disordered.

The protein belongs to the TACO1 family.

It is found in the cytoplasm. This Pelagibacter ubique (strain HTCC1062) protein is Probable transcriptional regulatory protein SAR11_0592.